The primary structure comprises 125 residues: Small ribosomal subunit protein bS6 (125 aa).

The interval 96-125 (VTEASPMKAAKEERKPLAEVENNDFEDAEE) is disordered. A compositionally biased stretch (basic and acidic residues) spans 104 to 113 (AAKEERKPLA). The segment covering 116–125 (ENNDFEDAEE) has biased composition (acidic residues).

The protein belongs to the bacterial ribosomal protein bS6 family.

In terms of biological role, binds together with bS18 to 16S ribosomal RNA. In Haemophilus influenzae (strain 86-028NP), this protein is Small ribosomal subunit protein bS6.